The chain runs to 253 residues: 5'-nucleotidase SurE (253 aa).

Residues Asp8, Asp9, Ser39, and Asn92 each coordinate a divalent metal cation.

Belongs to the SurE nucleotidase family. A divalent metal cation is required as a cofactor.

The protein resides in the cytoplasm. The enzyme catalyses a ribonucleoside 5'-phosphate + H2O = a ribonucleoside + phosphate. In terms of biological role, nucleotidase that shows phosphatase activity on nucleoside 5'-monophosphates. The chain is 5'-nucleotidase SurE from Burkholderia mallei (strain NCTC 10247).